Consider the following 204-residue polypeptide: MSTPIALVPARTAEVTRNTAETRITVKVNLDGSGQSHLSTGIGFFDHMLDQIARHGLIDLDIQATGDLHIDGHHTVEDVGITLGQAVHQAVGDKKGIRRYGHAYVPLDEALSRVVIDFSGRPGLVMDVPFKSGMIGTFDAQLAHEFFQGFVNHAFVTLHIDNLKGENAHHQAETVFKAFARALRAALEFDPRALGQIPSTKGTL.

Belongs to the imidazoleglycerol-phosphate dehydratase family.

It localises to the cytoplasm. The catalysed reaction is D-erythro-1-(imidazol-4-yl)glycerol 3-phosphate = 3-(imidazol-4-yl)-2-oxopropyl phosphate + H2O. It participates in amino-acid biosynthesis; L-histidine biosynthesis; L-histidine from 5-phospho-alpha-D-ribose 1-diphosphate: step 6/9. This Albidiferax ferrireducens (strain ATCC BAA-621 / DSM 15236 / T118) (Rhodoferax ferrireducens) protein is Imidazoleglycerol-phosphate dehydratase.